The sequence spans 82 residues: Cytochrome b559 subunit alpha (82 aa).

A helical membrane pass occupies residues 22–36; the sequence is VIHSITIPALFIAGW. His-24 is a heme binding site.

It belongs to the PsbE/PsbF family. In terms of assembly, heterodimer of an alpha subunit and a beta subunit. PSII is composed of 1 copy each of membrane proteins PsbA, PsbB, PsbC, PsbD, PsbE, PsbF, PsbH, PsbI, PsbJ, PsbK, PsbL, PsbM, PsbT, PsbX, PsbY, PsbZ, Psb30/Ycf12, peripheral proteins PsbO, CyanoQ (PsbQ), PsbU, PsbV and a large number of cofactors. It forms dimeric complexes. It depends on heme b as a cofactor.

Its subcellular location is the cellular thylakoid membrane. Functionally, this b-type cytochrome is tightly associated with the reaction center of photosystem II (PSII). PSII is a light-driven water:plastoquinone oxidoreductase that uses light energy to abstract electrons from H(2)O, generating O(2) and a proton gradient subsequently used for ATP formation. It consists of a core antenna complex that captures photons, and an electron transfer chain that converts photonic excitation into a charge separation. This Trichodesmium erythraeum (strain IMS101) protein is Cytochrome b559 subunit alpha.